Consider the following 139-residue polypeptide: Small ribosomal subunit protein uS19 (139 aa).

Belongs to the universal ribosomal protein uS19 family.

Functionally, protein S19 forms a complex with S13 that binds strongly to the 16S ribosomal RNA. The polypeptide is Small ribosomal subunit protein uS19 (Ignicoccus hospitalis (strain KIN4/I / DSM 18386 / JCM 14125)).